The chain runs to 178 residues: Ribosome rescue factor SmrB (178 aa).

Residues 99 to 174 form the Smr domain; that stretch reads LDLHGLTQMQ…GNAALLILIE (76 aa).

Belongs to the SmrB family. In terms of assembly, associates with collided ribosomes, but not with correctly translating polysomes.

Acts as a ribosome collision sensor. Detects stalled/collided disomes (pairs of ribosomes where the leading ribosome is stalled and a second ribosome has collided with it) and endonucleolytically cleaves mRNA at the 5' boundary of the stalled ribosome. Stalled/collided disomes form a new interface (primarily via the 30S subunits) that binds SmrB. Cleaved mRNA becomes available for tmRNA ligation, leading to ribosomal subunit dissociation and rescue of stalled ribosomes. In Photorhabdus laumondii subsp. laumondii (strain DSM 15139 / CIP 105565 / TT01) (Photorhabdus luminescens subsp. laumondii), this protein is Ribosome rescue factor SmrB.